The chain runs to 288 residues: Aquaporin PIP 1-3 (288 aa).

Positions 1-30 (MEGKEEDVRLGANRYTERQPIGTAAQGAEE) are disordered. 2 helical membrane passes run 57–77 (IAEF…VMGV) and 92–114 (IAWS…SGGH). The short motif at 116–118 (NPA) is the NPA 1 element. 3 helical membrane passes run 135–155 (VFYM…VKGF), 177–197 (GDGL…VFSA), and 211–231 (ILAP…TIPI). The short motif at 237–239 (NPA) is the NPA 2 element. The helical transmembrane segment at 259-279 (IFWVGPFIGAALAAIYHVVVI) threads the bilayer.

The protein belongs to the MIP/aquaporin (TC 1.A.8) family. PIP (TC 1.A.8.11) subfamily. Expressed in roots and leaves.

It localises to the cell membrane. In terms of biological role, water channel required to facilitate the transport of water across cell membrane. Increases the capacity for root water uptake under water deficit. May play a role in drought avoidance in upland rice. The protein is Aquaporin PIP 1-3 (PIP1-3) of Oryza sativa subsp. japonica (Rice).